The chain runs to 129 residues: Small ribosomal subunit protein uS11 (129 aa).

This sequence belongs to the universal ribosomal protein uS11 family. In terms of assembly, part of the 30S ribosomal subunit. Interacts with proteins S7 and S18. Binds to IF-3.

Its function is as follows. Located on the platform of the 30S subunit, it bridges several disparate RNA helices of the 16S rRNA. Forms part of the Shine-Dalgarno cleft in the 70S ribosome. This is Small ribosomal subunit protein uS11 from Brucella abortus (strain S19).